The sequence spans 952 residues: Protocadherin-20 (952 aa).

An N-terminal signal peptide occupies residues 1–60; that stretch reads MRGRGNARSLLVQAVSLRPATWHPCLDMGHLHRPSSRTSHRNLPHVFLLFLFVGPFNCLA. The Extracellular portion of the chain corresponds to 61-891; the sequence is SYSRATELLY…VESMSCMPTL (831 aa). Cadherin domains lie at 64 to 210, 211 to 321, 322 to 536, 537 to 640, 641 to 743, and 747 to 864; these read RATE…APQF, PISE…CPLF, IDSQ…APVF, LQPL…SPRF, INKD…PPLV, and QSNM…EPEI. Residue asparagine 135 is glycosylated (N-linked (GlcNAc...) asparagine). N-linked (GlcNAc...) asparagine glycans are attached at residues asparagine 327 and asparagine 333. Asparagine 681, asparagine 749, asparagine 804, asparagine 845, and asparagine 850 each carry an N-linked (GlcNAc...) asparagine glycan. A helical membrane pass occupies residues 892–912; it reads VALSVISLGSITLVTGMGIYI. At 913–952 the chain is on the cytoplasmic side; the sequence is CLRKGKKHHREDDNLEVQIPLKGKIDLCMRERKPVDISNI.

The protein resides in the cell membrane. Functionally, potential calcium-dependent cell-adhesion protein. In Mus musculus (Mouse), this protein is Protocadherin-20 (Pcdh20).